The following is a 200-amino-acid chain: UPF0316 protein Mhun_0543 (200 aa).

3 consecutive transmembrane segments (helical) span residues 3 to 23 (VGFL…IFLA), 44 to 64 (FIAP…IGQV), and 71 to 91 (PICY…GMEL).

The protein belongs to the UPF0316 family.

It localises to the cell membrane. In Methanospirillum hungatei JF-1 (strain ATCC 27890 / DSM 864 / NBRC 100397 / JF-1), this protein is UPF0316 protein Mhun_0543.